Consider the following 216-residue polypeptide: Thiamine-phosphate synthase (216 aa).

Residues 39 to 43 and asparagine 71 each bind 4-amino-2-methyl-5-(diphosphooxymethyl)pyrimidine; that span reads QLRRK. The Mg(2+) site is built by aspartate 72 and aspartate 91. A 4-amino-2-methyl-5-(diphosphooxymethyl)pyrimidine-binding site is contributed by serine 109. 136 to 138 is a binding site for 2-[(2R,5Z)-2-carboxy-4-methylthiazol-5(2H)-ylidene]ethyl phosphate; it reads SPT. A 4-amino-2-methyl-5-(diphosphooxymethyl)pyrimidine-binding site is contributed by lysine 139. Residues glycine 172 and 192–193 each bind 2-[(2R,5Z)-2-carboxy-4-methylthiazol-5(2H)-ylidene]ethyl phosphate; that span reads IT.

This sequence belongs to the thiamine-phosphate synthase family. Mg(2+) serves as cofactor.

It carries out the reaction 2-[(2R,5Z)-2-carboxy-4-methylthiazol-5(2H)-ylidene]ethyl phosphate + 4-amino-2-methyl-5-(diphosphooxymethyl)pyrimidine + 2 H(+) = thiamine phosphate + CO2 + diphosphate. The catalysed reaction is 2-(2-carboxy-4-methylthiazol-5-yl)ethyl phosphate + 4-amino-2-methyl-5-(diphosphooxymethyl)pyrimidine + 2 H(+) = thiamine phosphate + CO2 + diphosphate. The enzyme catalyses 4-methyl-5-(2-phosphooxyethyl)-thiazole + 4-amino-2-methyl-5-(diphosphooxymethyl)pyrimidine + H(+) = thiamine phosphate + diphosphate. It functions in the pathway cofactor biosynthesis; thiamine diphosphate biosynthesis; thiamine phosphate from 4-amino-2-methyl-5-diphosphomethylpyrimidine and 4-methyl-5-(2-phosphoethyl)-thiazole: step 1/1. Condenses 4-methyl-5-(beta-hydroxyethyl)thiazole monophosphate (THZ-P) and 2-methyl-4-amino-5-hydroxymethyl pyrimidine pyrophosphate (HMP-PP) to form thiamine monophosphate (TMP). The protein is Thiamine-phosphate synthase of Bordetella avium (strain 197N).